Reading from the N-terminus, the 352-residue chain is Glycerol-1-phosphate dehydrogenase [NAD(P)+] (352 aa).

NAD(+) contacts are provided by residues 99 to 103 and 121 to 124; these read GTKID and TSPS. Asp126 contributes to the substrate binding site. Ser130 is a binding site for NAD(+). Asp173 is a binding site for substrate. The Zn(2+) site is built by Asp173 and His253. His257 contacts substrate. His269 contacts Zn(2+).

It belongs to the glycerol-1-phosphate dehydrogenase family. Zn(2+) serves as cofactor.

It localises to the cytoplasm. The catalysed reaction is sn-glycerol 1-phosphate + NAD(+) = dihydroxyacetone phosphate + NADH + H(+). The enzyme catalyses sn-glycerol 1-phosphate + NADP(+) = dihydroxyacetone phosphate + NADPH + H(+). It functions in the pathway membrane lipid metabolism; glycerophospholipid metabolism. Its function is as follows. Catalyzes the NAD(P)H-dependent reduction of dihydroxyacetonephosphate (DHAP or glycerone phosphate) to glycerol 1-phosphate (G1P). The G1P thus generated is used as the glycerophosphate backbone of phospholipids in the cellular membranes of Archaea. This is Glycerol-1-phosphate dehydrogenase [NAD(P)+] from Thermoplasma volcanium (strain ATCC 51530 / DSM 4299 / JCM 9571 / NBRC 15438 / GSS1).